The sequence spans 119 residues: Ribonuclease P protein component (119 aa).

The protein belongs to the RnpA family. Consists of a catalytic RNA component (M1 or rnpB) and a protein subunit.

The enzyme catalyses Endonucleolytic cleavage of RNA, removing 5'-extranucleotides from tRNA precursor.. RNaseP catalyzes the removal of the 5'-leader sequence from pre-tRNA to produce the mature 5'-terminus. It can also cleave other RNA substrates such as 4.5S RNA. The protein component plays an auxiliary but essential role in vivo by binding to the 5'-leader sequence and broadening the substrate specificity of the ribozyme. The polypeptide is Ribonuclease P protein component (Salmonella schwarzengrund (strain CVM19633)).